The primary structure comprises 449 residues: GTPase Der (449 aa).

EngA-type G domains are found at residues 3 to 167 (AVIA…PTSE) and 178 to 351 (PRIA…IDSR). GTP is bound by residues 9–16 (GRPNVGKS), 56–60 (DTGGF), 119–122 (NKMD), 184–191 (GRPNVGKS), 231–235 (DTAGM), and 296–299 (NKWD). The 85-residue stretch at 352–436 (RHFSTAELNR…PLRLVFRQGE (85 aa)) folds into the KH-like domain.

It belongs to the TRAFAC class TrmE-Era-EngA-EngB-Septin-like GTPase superfamily. EngA (Der) GTPase family. Associates with the 50S ribosomal subunit.

In terms of biological role, GTPase that plays an essential role in the late steps of ribosome biogenesis. This chain is GTPase Der, found in Acidithiobacillus ferrooxidans (strain ATCC 23270 / DSM 14882 / CIP 104768 / NCIMB 8455) (Ferrobacillus ferrooxidans (strain ATCC 23270)).